Reading from the N-terminus, the 357-residue chain is Putative ankyrin repeat protein L42 (357 aa).

9 ANK repeats span residues 34–63, 86–115, 116–145, 147–175, 176–205, 206–235, 237–265, 267–294, and 301–331; these read SCKQ…NLKF, EQNE…DFRM, NDDE…NIRA, NNRP…SFVS, KQNE…DINV, GKIP…SINK, SVDS…EVNI, YYAF…ITKD, and NTRY…DKDK.

The sequence is that of Putative ankyrin repeat protein L42 from Acanthamoeba polyphaga (Amoeba).